The primary structure comprises 156 residues: SsrA-binding protein (156 aa).

Positions 131 to 156 are disordered; it reads YDKRQTLREQQDKREALRVMRERNRG.

The protein belongs to the SmpB family.

The protein localises to the cytoplasm. Required for rescue of stalled ribosomes mediated by trans-translation. Binds to transfer-messenger RNA (tmRNA), required for stable association of tmRNA with ribosomes. tmRNA and SmpB together mimic tRNA shape, replacing the anticodon stem-loop with SmpB. tmRNA is encoded by the ssrA gene; the 2 termini fold to resemble tRNA(Ala) and it encodes a 'tag peptide', a short internal open reading frame. During trans-translation Ala-aminoacylated tmRNA acts like a tRNA, entering the A-site of stalled ribosomes, displacing the stalled mRNA. The ribosome then switches to translate the ORF on the tmRNA; the nascent peptide is terminated with the 'tag peptide' encoded by the tmRNA and targeted for degradation. The ribosome is freed to recommence translation, which seems to be the essential function of trans-translation. The protein is SsrA-binding protein of Arthrobacter sp. (strain FB24).